The sequence spans 338 residues: Fructose-1,6-bisphosphatase class 1 (338 aa).

4 residues coordinate Mg(2+): Glu-92, Asp-113, Leu-115, and Asp-116. Residues 116–119, Asn-208, and Lys-274 contribute to the substrate site; that span reads DGSS. Glu-280 serves as a coordination point for Mg(2+).

The protein belongs to the FBPase class 1 family. In terms of assembly, homotetramer. It depends on Mg(2+) as a cofactor.

It is found in the cytoplasm. The enzyme catalyses beta-D-fructose 1,6-bisphosphate + H2O = beta-D-fructose 6-phosphate + phosphate. Its pathway is carbohydrate biosynthesis; gluconeogenesis. The chain is Fructose-1,6-bisphosphatase class 1 from Paramagnetospirillum magneticum (strain ATCC 700264 / AMB-1) (Magnetospirillum magneticum).